Consider the following 739-residue polypeptide: uncharacterized protein (739 aa).

8 helical membrane passes run 53 to 73 (LALG…ALTV), 90 to 110 (WHLF…AAIP), 114 to 134 (LMFI…GTFM), 178 to 198 (TYIL…QLGL), 421 to 441 (LIWI…VCIV), 457 to 477 (AFLR…LALM), 491 to 511 (GLAM…LPAV), and 532 to 552 (IVYF…SWMY).

This sequence belongs to the aromatic acid exporter ArAE (TC 2.A.85) family.

The protein resides in the cell membrane. This is an uncharacterized protein from Gluconobacter oxydans (strain 621H) (Gluconobacter suboxydans).